A 402-amino-acid chain; its full sequence is FMN-dependent alpha-hydroxy acid dehydrogenase qulF (402 aa).

The region spanning 22–394 (RLPAITTNPT…NRDCMRRISY (373 aa)) is the FMN hydroxy acid dehydrogenase domain. Tyr-48 lines the a 2-oxocarboxylate pocket. 2 residues coordinate FMN: Ser-130 and Gln-152. 2 residues coordinate a 2-oxocarboxylate: Tyr-154 and Arg-189. Residue Lys-265 coordinates FMN. Residue His-289 is the Proton acceptor of the active site. A 2-oxocarboxylate is bound at residue Arg-292. FMN contacts are provided by residues 320–324 (DSGVR) and 343–344 (GR).

It belongs to the FMN-dependent alpha-hydroxy acid dehydrogenase family. FMN is required as a cofactor.

FMN-dependent alpha-hydroxy acid dehydrogenase; part of the gene cluster that mediates the biosynthesis of quinolactacin A2 (QUL A2), a fungal alkaloid that features a quinolone-gamma-lactam hybrid, which is a potential pharmacophore for the treatment of cancer and Alzheimer's disease. The quinolone-gamma-lactam hybrid scaffold is synthesized from the combination of L-isoleucine (L-Ile) and the nonproteinogenic amino acid L-kynurenine, followed by quinolone cyclization, oxidative decarboxylation, and lactam formation. Additionally, the N-methyl group is derived from methionine, which might be catalyzed by an S-adenosylmethionine (SAM)-dependent methyltransferase. Bioconversion of L-tryptophan to L-kynurenine could be catalyzed by the indoleamine-2,3-dioxygenase (IDO) qulI to produce an unstable product, N-formyl-L-kynurenine, followed by kynurenine formamidase catalyzed hydrolysis. QulM then acts as a methyltransferase that methylates L-kynurenine at the N-4 position. The FMN-dependent alpha-hydroxy acid dehydrogenase qulF than functions as an oxidative decarboxylase which converts N-methylkynurenine into 2-aminobenzoylacetamide via 2 tandem reactions, including dehydrogenation and decarboxylation. An amidase located outside of the qul gene cluster further produces the unstable beta-keto acid precursor N-methyl-2-aminobenzoylacetate, which could be spontaneously dehydrated to form N-methyl-4-hydroxy-2-quinolone. The NRPS qulB is able to incorporate N-methyl-2-aminobenzoylacetate and efficiently compete with the spontaneous reaction. By further extending the beta-keto acid with L-Ile, qulA performs a Dieckmann condensation to form the gamma-lactam ring and release a 4-ketopyrrolidinone intermediate from the assembly line. This intermediate could plausibly further undergo a spontaneous cyclization to yield the final quinolone-gamma-lactam hybrid structure. The chain is FMN-dependent alpha-hydroxy acid dehydrogenase qulF from Penicillium citrinum.